Here is a 1088-residue protein sequence, read N- to C-terminus: Leucine-rich repeat receptor-like protein kinase PEPR2 (1088 aa).

Positions 1 to 26 (MRNLGLLEITLLCSLFVYFRIDSVSS) are cleaved as a signal peptide. Topologically, residues 27-739 (LNSDGLALLS…QVKLSTWKIA (713 aa)) are extracellular. Residues Asn55, Asn82, and Asn122 are each glycosylated (N-linked (GlcNAc...) asparagine). LRR repeat units lie at residues 75–99 (GNVVETLNLSASGLSGQLGSEIGEL), 100–122 (KSLVTLDLSLNSFSGLLPSTLGN), 123–146 (CTSLEYLDLSNNDFSGEVPDIFGS), 147–170 (LQNLTFLYLDRNNLSGLIPASVGG), 172–194 (IELVDLRMSYNNLSGTIPELLGN), 195–219 (CSKLEYLALNNNKLNGSLPASLYLL), 221–243 (NLGELFVSNNSLGGRLHFGSSNC), 244–267 (KKLVSLDLSFNDFQGGVPPEIGNC), 269–291 (SLHSLVMVKCNLTGTIPSSMGML), 292–315 (RKVSVIDLSDNRLSGNIPQELGNC), 316–339 (SSLETLKLNDNQLQGEIPPALSKL), 341–363 (KLQSLELFFNKLSGEIPIGIWKI), 365–387 (SLTQMLVYNNTLTGELPVEVTQL), 388–411 (KHLKKLTLFNNGFYGDIPMSLGLN), 412–435 (RSLEEVDLLGNRFTGEIPPHLCHG), 436–459 (QKLRLFILGSNQLHGKIPASIRQC), 460–485 (KTLERVRLEDNKLSGVLPEFPESLSL), 487–506 (YVNLGSNSFEGSIPRSLGSC), 507–529 (KNLLTIDLSQNKLTGLIPPELGN), 530–554 (LQSLGLLNLSHNYLEGPLPSQLSGC), 556–577 (RLLYFDVGSNSLNGSIPSSFRS), 578–602 (WKSLSTLVLSDNNFLGAIPQFLAEL), 603–627 (DRLSDLRIARNAFGGKIPSSVGLLK), 629–651 (LRYGLDLSANVFTGEIPTTLGAL), 652–676 (INLERLNISNNKLTGPLSVLQSLKS), and 678–698 (NQVDVSYNQFTGPIPVNLLSN). Residues Asn149, Asn159, Asn183, Asn194, Asn209, Asn229, Asn266, Asn279, and Asn314 are each glycosylated (N-linked (GlcNAc...) asparagine). N-linked (GlcNAc...) asparagine glycans are attached at residues Asn373 and Asn411. Residues Asn537 and Asn568 are each glycosylated (N-linked (GlcNAc...) asparagine). Asn658 and Asn698 each carry an N-linked (GlcNAc...) asparagine glycan. The chain crosses the membrane as a helical span at residues 740 to 760 (LIAAGSSLSVLALLFALFLVL). Residues 761 to 1088 (CRCKRGTKTE…FVRSTSGSVH (328 aa)) lie on the Cytoplasmic side of the membrane. Residue Thr791 is modified to Phosphothreonine. The region spanning 794–1080 (LDDKYIIGRG…KDLTDLESFV (287 aa)) is the Protein kinase domain. Residues 800-808 (IGRGAHGVV) and Lys822 contribute to the ATP site. A phosphotyrosine mark is found at Tyr868 and Tyr908. Asp921 acts as the Proton acceptor in catalysis. Phosphotyrosine is present on residues Tyr962 and Tyr969.

It belongs to the protein kinase superfamily. Ser/Thr protein kinase family. In terms of assembly, interacts with BAK1. Interacts with CLE14.

Its subcellular location is the cell membrane. It carries out the reaction L-seryl-[protein] + ATP = O-phospho-L-seryl-[protein] + ADP + H(+). The enzyme catalyses L-threonyl-[protein] + ATP = O-phospho-L-threonyl-[protein] + ADP + H(+). Acts as a receptor for PEP defense peptides. Unlike typical immune receptors, senses an endogenous elicitor that potentiates PAMP-inducible plant responses. This is Leucine-rich repeat receptor-like protein kinase PEPR2 (PEPR2) from Arabidopsis thaliana (Mouse-ear cress).